The chain runs to 357 residues: DNA replication and repair protein RecF (357 aa).

30–37 (GANGSGKT) is a binding site for ATP.

Belongs to the RecF family.

It localises to the cytoplasm. The RecF protein is involved in DNA metabolism; it is required for DNA replication and normal SOS inducibility. RecF binds preferentially to single-stranded, linear DNA. It also seems to bind ATP. This chain is DNA replication and repair protein RecF, found in Cronobacter sakazakii (strain ATCC BAA-894) (Enterobacter sakazakii).